Here is a 305-residue protein sequence, read N- to C-terminus: Glycine--tRNA ligase alpha subunit (305 aa).

Belongs to the class-II aminoacyl-tRNA synthetase family. In terms of assembly, tetramer of two alpha and two beta subunits.

Its subcellular location is the cytoplasm. The catalysed reaction is tRNA(Gly) + glycine + ATP = glycyl-tRNA(Gly) + AMP + diphosphate. In Streptococcus uberis (strain ATCC BAA-854 / 0140J), this protein is Glycine--tRNA ligase alpha subunit.